We begin with the raw amino-acid sequence, 206 residues long: ATP-dependent dethiobiotin synthetase BioD (206 aa).

12 to 17 (DSGKTL) is a binding site for ATP. Residue threonine 16 participates in Mg(2+) binding. The active site involves lysine 32. Residue glutamate 99 coordinates Mg(2+). Residue 99 to 102 (EGAG) participates in ATP binding.

It belongs to the dethiobiotin synthetase family. Homodimer. The cofactor is Mg(2+).

It localises to the cytoplasm. The enzyme catalyses (7R,8S)-7,8-diammoniononanoate + CO2 + ATP = (4R,5S)-dethiobiotin + ADP + phosphate + 3 H(+). Its pathway is cofactor biosynthesis; biotin biosynthesis; biotin from 7,8-diaminononanoate: step 1/2. Catalyzes a mechanistically unusual reaction, the ATP-dependent insertion of CO2 between the N7 and N8 nitrogen atoms of 7,8-diaminopelargonic acid (DAPA, also called 7,8-diammoniononanoate) to form a ureido ring. The chain is ATP-dependent dethiobiotin synthetase BioD from Cytophaga hutchinsonii (strain ATCC 33406 / DSM 1761 / CIP 103989 / NBRC 15051 / NCIMB 9469 / D465).